The chain runs to 821 residues: PX domain-containing protein C1450.12 (821 aa).

The PX domain maps to 171–310 (AYVLGVRQST…SFLTDDPVTL (140 aa)). Positions 235–271 (KDDHDTYLNSSEDSTLSPLPSRSSDTNDPQSDSQHVL) are disordered. A compositionally biased stretch (polar residues) spans 241–268 (YLNSSEDSTLSPLPSRSSDTNDPQSDSQ). Phosphothreonine is present on residues Thr-260 and Thr-597. Acidic residues-rich tracts occupy residues 737–746 (GDEDDQDEND) and 754–766 (EHMEDDDSVEEFD). A disordered region spans residues 737 to 766 (GDEDDQDENDQVTKVEEEHMEDDDSVEEFD). Ser-761 is subject to Phosphoserine.

It is found in the mitochondrion membrane. The sequence is that of PX domain-containing protein C1450.12 from Schizosaccharomyces pombe (strain 972 / ATCC 24843) (Fission yeast).